The following is a 204-amino-acid chain: Methylthioribulose-1-phosphate dehydratase (204 aa).

Zn(2+)-binding residues include histidine 94 and histidine 96.

Belongs to the aldolase class II family. MtnB subfamily. The cofactor is Zn(2+).

It carries out the reaction 5-(methylsulfanyl)-D-ribulose 1-phosphate = 5-methylsulfanyl-2,3-dioxopentyl phosphate + H2O. It participates in amino-acid biosynthesis; L-methionine biosynthesis via salvage pathway; L-methionine from S-methyl-5-thio-alpha-D-ribose 1-phosphate: step 2/6. In terms of biological role, catalyzes the dehydration of methylthioribulose-1-phosphate (MTRu-1-P) into 2,3-diketo-5-methylthiopentyl-1-phosphate (DK-MTP-1-P). The chain is Methylthioribulose-1-phosphate dehydratase from Enterobacter sp. (strain 638).